The sequence spans 525 residues: Serine/threonine protein phosphatase 2A 55 kDa regulatory subunit B beta isoform (525 aa).

Positions 1 to 30 are disordered; that stretch reads MDPSSKSPDDDDLRPEAEAARRPQPQPQPR. 2 WD repeats span residues 48-87 and 124-165; these read QEVDIISAIEFDKSGDHLATGDRGGRVVLFERTDSRDSAS and EIEE…VKRI. Residues 169–191 are disordered; the sequence is NLNTSQSSGNGTTSSSSSSSSRA. Over residues 171-189 the composition is skewed to low complexity; it reads NTSQSSGNGTTSSSSSSSS. 4 WD repeats span residues 244–282, 293–333, 352–390, and 495–525; these read AHDYHINSISNNSDGETYISADDLRINLWNLEISNQSFN, DLTE…LCDN, EIIASVSDIKFARDGRHILSRDYMTLKLWDINMDSGPVA, and DLSTKLLHLAWHPTENSIACAAANSLYMYYA.

It belongs to the phosphatase 2A regulatory subunit B family. In terms of assembly, PP2A consists of a common heteromeric enzyme, composed of a catalytic subunit (subunits C), a constant regulatory subunit (subunit A), and a variety of regulatory subunits such as subunits B (the R2/B/PR55/B55, R3/B''/PR72/PR130/PR59 and R5/B'/B56 families).

Functionally, the B regulatory subunit may modulate substrate selectivity and catalytic activity, and may also direct the localization of the catalytic enzyme to a particular subcellular compartment. The chain is Serine/threonine protein phosphatase 2A 55 kDa regulatory subunit B beta isoform from Oryza sativa subsp. japonica (Rice).